Here is an 87-residue protein sequence, read N- to C-terminus: Small ribosomal subunit protein uS17 (87 aa).

It belongs to the universal ribosomal protein uS17 family. In terms of assembly, part of the 30S ribosomal subunit.

Its function is as follows. One of the primary rRNA binding proteins, it binds specifically to the 5'-end of 16S ribosomal RNA. This Geobacillus stearothermophilus (Bacillus stearothermophilus) protein is Small ribosomal subunit protein uS17.